A 343-amino-acid polypeptide reads, in one-letter code: Probable dual-specificity RNA methyltransferase RlmN (343 aa).

Glu91 acts as the Proton acceptor in catalysis. Residues 97–326 (HPDRITACIS…AEIRREKGTD (230 aa)) enclose the Radical SAM core domain. An intrachain disulfide couples Cys104 to Cys331. Cys111, Cys115, and Cys118 together coordinate [4Fe-4S] cluster. Residues 158–159 (GE), Ser190, 213–215 (SLH), and Asn289 contribute to the S-adenosyl-L-methionine site. Residue Cys331 is the S-methylcysteine intermediate of the active site.

It belongs to the radical SAM superfamily. RlmN family. It depends on [4Fe-4S] cluster as a cofactor.

Its subcellular location is the cytoplasm. The enzyme catalyses adenosine(2503) in 23S rRNA + 2 reduced [2Fe-2S]-[ferredoxin] + 2 S-adenosyl-L-methionine = 2-methyladenosine(2503) in 23S rRNA + 5'-deoxyadenosine + L-methionine + 2 oxidized [2Fe-2S]-[ferredoxin] + S-adenosyl-L-homocysteine. It catalyses the reaction adenosine(37) in tRNA + 2 reduced [2Fe-2S]-[ferredoxin] + 2 S-adenosyl-L-methionine = 2-methyladenosine(37) in tRNA + 5'-deoxyadenosine + L-methionine + 2 oxidized [2Fe-2S]-[ferredoxin] + S-adenosyl-L-homocysteine. Specifically methylates position 2 of adenine 2503 in 23S rRNA and position 2 of adenine 37 in tRNAs. In Thermotoga maritima (strain ATCC 43589 / DSM 3109 / JCM 10099 / NBRC 100826 / MSB8), this protein is Probable dual-specificity RNA methyltransferase RlmN.